Reading from the N-terminus, the 190-residue chain is Orotate phosphoribosyltransferase (190 aa).

114–122 (EDVITTGGS) lines the 5-phospho-alpha-D-ribose 1-diphosphate pocket. The orotate site is built by Thr-118 and Arg-146.

This sequence belongs to the purine/pyrimidine phosphoribosyltransferase family. PyrE subfamily. Homodimer. Mg(2+) is required as a cofactor.

It catalyses the reaction orotidine 5'-phosphate + diphosphate = orotate + 5-phospho-alpha-D-ribose 1-diphosphate. It functions in the pathway pyrimidine metabolism; UMP biosynthesis via de novo pathway; UMP from orotate: step 1/2. Functionally, catalyzes the transfer of a ribosyl phosphate group from 5-phosphoribose 1-diphosphate to orotate, leading to the formation of orotidine monophosphate (OMP). This is Orotate phosphoribosyltransferase from Pelotomaculum thermopropionicum (strain DSM 13744 / JCM 10971 / SI).